The primary structure comprises 614 residues: MNKDEELLIEAIENDDLKEVQKLLQEGVDPNILDEDDKPCILSAIRNKNLDIVSVLLENGANPNAVDADGEPIISAAIRTKRLDIINILLENRADPNLQPPRKNTILLKAIQSNNLDIVNAFLNKGANLNALDISGYPIFLKAIKSENLEIINALLEKGANPNLVDKDGSPLLFTAINTKNLDIIDALIKMGANVEAKNKDGNTVLNVLLERRGNVNIISLLIENSQDKEKIFNLKNNNGETFLHLAAQQGNSKIFDKYLDYYPTVNITDKAGYTPLYWSKLLGHTEISNKLIERAEELKETVYTKVTRTKFFENLPSIPKIAVSYNSKVRGETSEATRNKLKYQYCNVEDIDYRKIVPESANAEKKINEEIVNEAKRKAKEFLADKDALVIPGNNSSVDPKIAEHFGGQVNLEKNKFDFARSLAEMAMLEVAIEKGMPIMGICGGHQIINAYLKGKIDEVSKHKHDSIIIEPDSELASIIKRNSPTKDILNQEFWGMHNDKVQEIGGKNRLIDNKDLLKVTATNEHREIEATESQFGAPIRTFQFHPEMSKTTYSNAEIIRDKKIFASFVQSAETFMNKKSLGADIKFKVPVKKSFTEMVLNRKEQQNNQRGI.

ANK repeat units lie at residues 3-32, 36-65, 69-98, 102-131, 135-164, 168-197, 201-231, 239-268, and 272-301; these read KDEE…DPNI, DDKP…NPNA, DGEP…DPNL, RKNT…NLNA, SGYP…NPNL, DGSP…NVEA, DGNT…DKEK, NGET…TVNI, and AGYT…ELKE. The region spanning 348–580 is the Glutamine amidotransferase type-1 domain; sequence NVEDIDYRKI…VQSAETFMNK (233 aa). Cys444 acts as the Nucleophile in catalysis. Residues His547 and Glu549 contribute to the active site.

This Rickettsia bellii (strain RML369-C) protein is Putative ankyrin repeat protein RBE_0997.